We begin with the raw amino-acid sequence, 892 residues long: MEINHDYRVKLFDELGFERKQCTECNQWFWTLDKDRTTCGDSPCDEYSFIGSPITSKKYTYNEMVKEFTNFFAEKGHSPVKRSPVVAKRWRDDILLTIASIAVFQPWVTSGLVKPVKNPLVIAQPCIRLNDIDNVGRTGRHLTCFTMGAHHAFNSKDEYKYWTDKTVEYCFELMKRLGIDEKTVTFIESWWEGGGNAGPCYEVITHGVELATLVFMQYKKVGNDYEEIPLKIVDTGYGIERFAWASQGTPTVYESLFSEVIEKLKKDAGIPEVDEKIMAESATLAGLMDIENVGDLRVLRQKVAEKIGMDVDELDKLISPLEYIYAIADHTRCLSFMFGDGIVPSNVKEGYLARLVLRKTLRYMEKIGISMSIKDIIAMQLENMKEIYPELSEMKEYIMDVLDSEEKKYIQTVNRGRGIVERMAVSKSEITLDDLIELYDSNGIPPEIVKDVVDEINKKGKKTIAITVPDNFYTIVAERHEEEKPEEVVSTKKELPELEVSETELLFFKHPTQVEFEAKVLKTVEKYVLLDKTLFYAEGGGQKYDIGQLNGIEVSDVQKKNGIVFHKVSDISKFKEGDTVKGTLNWENRLKLMRNHTATHVINAAATRVLGKHIWQTGSNVDTEKGRLDITHYERISREQVKEIERIANEIVLSKMPVNSTFMDRNDSEQKYGFTIYQGGVVPGDTLRIIEIEGTDVEACGGTHCSNTSEVGYIKVLKTERIQDGVERLEYSTGMGSVSEIAVLEDILIDSAEILGIPNDQLPKTVKRFFEEWKEQKKTIEELQKKVGELVKYELADKFEKHGDYEVLVEQVSGTPNELMSIADNLAIGNKLIVLMNENDYLLCKRGENVELSMKELIRNIGKGGGKDNLAQGKYSETKEQITEKISQILNK.

Residues His-596, His-600, Cys-700, and His-704 each contribute to the Zn(2+) site.

The protein belongs to the class-II aminoacyl-tRNA synthetase family. Zn(2+) serves as cofactor.

It is found in the cytoplasm. The enzyme catalyses tRNA(Ala) + L-alanine + ATP = L-alanyl-tRNA(Ala) + AMP + diphosphate. Functionally, catalyzes the attachment of alanine to tRNA(Ala) in a two-step reaction: alanine is first activated by ATP to form Ala-AMP and then transferred to the acceptor end of tRNA(Ala). Also edits incorrectly charged Ser-tRNA(Ala) and Gly-tRNA(Ala) via its editing domain. The sequence is that of Alanine--tRNA ligase from Methanococcus maripaludis (strain C5 / ATCC BAA-1333).